Consider the following 275-residue polypeptide: 2,3,4,5-tetrahydropyridine-2,6-dicarboxylate N-succinyltransferase (275 aa).

Substrate-binding residues include Arg-106 and Asp-143.

The protein belongs to the transferase hexapeptide repeat family. As to quaternary structure, homotrimer.

It localises to the cytoplasm. It carries out the reaction (S)-2,3,4,5-tetrahydrodipicolinate + succinyl-CoA + H2O = (S)-2-succinylamino-6-oxoheptanedioate + CoA. The protein operates within amino-acid biosynthesis; L-lysine biosynthesis via DAP pathway; LL-2,6-diaminopimelate from (S)-tetrahydrodipicolinate (succinylase route): step 1/3. This chain is 2,3,4,5-tetrahydropyridine-2,6-dicarboxylate N-succinyltransferase, found in Rickettsia bellii (strain RML369-C).